A 470-amino-acid polypeptide reads, in one-letter code: UDP-N-acetylmuramate--L-alanine ligase (470 aa).

Residue Gly118–Thr124 participates in ATP binding.

It belongs to the MurCDEF family.

The protein localises to the cytoplasm. The catalysed reaction is UDP-N-acetyl-alpha-D-muramate + L-alanine + ATP = UDP-N-acetyl-alpha-D-muramoyl-L-alanine + ADP + phosphate + H(+). It participates in cell wall biogenesis; peptidoglycan biosynthesis. Functionally, cell wall formation. The protein is UDP-N-acetylmuramate--L-alanine ligase of Cereibacter sphaeroides (strain ATCC 17029 / ATH 2.4.9) (Rhodobacter sphaeroides).